Here is a 284-residue protein sequence, read N- to C-terminus: MDAIKKKMQMLKLDKENALDRAEQAEADKKGAEDKSKQLEDELVALQKKLKGTEDELDKYSEALKDAQEKLELSDKKATDAEGDVASLNRRIQLVEEELDRAQERLSTALQKLEEAEKAADESERGMKVIENRALKDEEKMELQEIQLKEAKHIAEEADRKYEEVARKLVIIEGDLERAEERAELSESKCAELEEELKTVTNNLKSLEAQAEKYSQKEDKYEEEIKVLTDKLKEAETRAEFAERTVAKLEKSIDDLEDELYAQKLKYKAISEELDHALNDMTSI.

A disordered region spans residues 1–38 (MDAIKKKMQMLKLDKENALDRAEQAEADKKGAEDKSKQ). Residues 1–284 (MDAIKKKMQM…DHALNDMTSI (284 aa)) are a coiled coil. Residues 12–38 (KLDKENALDRAEQAEADKKGAEDKSKQ) show a composition bias toward basic and acidic residues.

This sequence belongs to the tropomyosin family. As to quaternary structure, homodimer. Heterodimer of an alpha (TPM1, TPM3 or TPM4) and a beta (TPM2) chain.

The protein resides in the cytoplasm. It is found in the cytoskeleton. Its function is as follows. Binds to actin filaments in muscle and non-muscle cells. Plays a central role, in association with the troponin complex, in the calcium dependent regulation of vertebrate striated muscle contraction. Smooth muscle contraction is regulated by interaction with caldesmon. In non-muscle cells is implicated in stabilizing cytoskeleton actin filaments. In Xenopus laevis (African clawed frog), this protein is Tropomyosin alpha-1 chain (tpm1).